Here is a 308-residue protein sequence, read N- to C-terminus: Isoflavone reductase-like protein (308 aa).

Residues 11–17 (GGTGYIG), Arg-36, and Lys-45 contribute to the NADP(+) site. Lys-133 (proton acceptor) is an active-site residue. NADP(+) is bound at residue Arg-137.

This sequence belongs to the NmrA-type oxidoreductase family. Isoflavone reductase subfamily. Homodimer.

The protein localises to the cytoplasm. This chain is Isoflavone reductase-like protein, found in Olea europaea (Common olive).